The chain runs to 202 residues: FMN-dependent NADH:quinone oxidoreductase 2 (202 aa).

Residues S9, 15 to 17 (SAS), 95 to 98 (MYNF), and 139 to 142 (TAGG) each bind FMN.

This sequence belongs to the azoreductase type 1 family. In terms of assembly, homodimer. FMN is required as a cofactor.

It catalyses the reaction 2 a quinone + NADH + H(+) = 2 a 1,4-benzosemiquinone + NAD(+). It carries out the reaction N,N-dimethyl-1,4-phenylenediamine + anthranilate + 2 NAD(+) = 2-(4-dimethylaminophenyl)diazenylbenzoate + 2 NADH + 2 H(+). Quinone reductase that provides resistance to thiol-specific stress caused by electrophilic quinones. Reduces both benzoquinones and naphthoquinones efficiently. In terms of biological role, also exhibits azoreductase activity. Catalyzes the reductive cleavage of the azo bond in aromatic azo compounds to the corresponding amines. Preferred substrates are the large bis-azo dye Ponceau BS, amaranth and tropaeolin O. The protein is FMN-dependent NADH:quinone oxidoreductase 2 of Pseudomonas aeruginosa (strain ATCC 15692 / DSM 22644 / CIP 104116 / JCM 14847 / LMG 12228 / 1C / PRS 101 / PAO1).